A 191-amino-acid chain; its full sequence is Putative NADH dehydrogenase/NAD(P)H nitroreductase (191 aa).

Alanine 127–glycine 132 provides a ligand contact to NAD(+).

The protein belongs to the nitroreductase family. FMN serves as cofactor.

The chain is Putative NADH dehydrogenase/NAD(P)H nitroreductase from Methanothermobacter thermautotrophicus (strain ATCC 29096 / DSM 1053 / JCM 10044 / NBRC 100330 / Delta H) (Methanobacterium thermoautotrophicum).